A 524-amino-acid chain; its full sequence is Putative ribose/galactose/methyl galactoside import ATP-binding protein 1 (524 aa).

2 consecutive ABC transporter domains span residues L29–T270 and V280–H524. G61–S68 contacts ATP.

It belongs to the ABC transporter superfamily. Carbohydrate importer 2 (CUT2) (TC 3.A.1.2) family.

It localises to the cell inner membrane. The catalysed reaction is D-ribose(out) + ATP + H2O = D-ribose(in) + ADP + phosphate + H(+). The enzyme catalyses D-galactose(out) + ATP + H2O = D-galactose(in) + ADP + phosphate + H(+). Part of an ABC transporter complex involved in carbohydrate import. Could be involved in ribose, galactose and/or methyl galactoside import. Responsible for energy coupling to the transport system. This Rhizobium etli (strain ATCC 51251 / DSM 11541 / JCM 21823 / NBRC 15573 / CFN 42) protein is Putative ribose/galactose/methyl galactoside import ATP-binding protein 1.